A 723-amino-acid chain; its full sequence is MPQHAMGDTHFLSLPKHLFTSTSSATDSGCDTPPSSRASPASLRSAHGTLGSSSQPLFEPQAEKRSSQTAREVQYVSSGPQNSLCGWQAFTPKCLQVFNTPKGFLFFLCAASFLQGMTVNGFINTVITSIERRFDLHSYQSGLIASSYDIAACLCLTFVSYFGGNGHKPRWLGWGVLVLGIGSLVFALPHFTAGRYEVEMDEGLGTGTCLTNQSHVECKDSASGLSNYRLIFMLGQLLHGVGATPLYTLGVTYLDENVKSSYSPIYIAIFYTAAILGPAAGYLIGGAMLNVYTEVGQRTELTTDSPLWVGAWWIGFLGTGIAAFLIAIPILGYPRQLPGSQRYVVMRAAETQQLKDHSRGAVSNPAFGKTVRDLPLSIWLLLRNPTFILLCLAGATEATLIAGMSTFGPKFFEAQFSLSASEAATLFGYLVVPAGGGGTLLGGFLVNKFKLRGSGIIRFCLFCTLTSLLAFFVFLMHCPNVHMAGVTTGYVGSLLPKGQLDLKAACNAIYCCQPKHYSPLCGSDGTMYYSPCYAGCPADAETDLGGQKVYRGCSCILEKASSGWGNATAGKCASTCQSKPFLLVLVFVVIIFTFLSSIPALTATLRCVSDRQRSFALGIQWIVVRTLGSIPGPIAFGWVIDKACLLWQDQCGHQGSCFVYENEAMSRYMLIAGLTFKVLGFLFFVAAYFLYKSPSVSSDGLEASLPSQSSASDSPTEQLQSNV.

The Cytoplasmic portion of the chain corresponds to 1 to 102 (MPQHAMGDTH…KCLQVFNTPK (102 aa)). Residues 23–64 (SSATDSGCDTPPSSRASPASLRSAHGTLGSSSQPLFEPQAEK) form a disordered region. A compositionally biased stretch (low complexity) spans 33–46 (PPSSRASPASLRSA). Serine 39, serine 42, and serine 45 each carry phosphoserine. Residues 103-123 (GFLFFLCAASFLQGMTVNGFI) form a helical membrane-spanning segment. Over 124–142 (NTVITSIERRFDLHSYQSG) the chain is Extracellular. Residues 143–163 (LIASSYDIAACLCLTFVSYFG) form a helical membrane-spanning segment. Residues 164 to 169 (GNGHKP) are Cytoplasmic-facing. A helical transmembrane segment spans residues 170–194 (RWLGWGVLVLGIGSLVFALPHFTAG). Residues 195 to 224 (RYEVEMDEGLGTGTCLTNQSHVECKDSASG) lie on the Extracellular side of the membrane. N-linked (GlcNAc...) asparagine glycosylation occurs at asparagine 212. A helical transmembrane segment spans residues 225–255 (LSNYRLIFMLGQLLHGVGATPLYTLGVTYLD). The Cytoplasmic segment spans residues 256 to 274 (ENVKSSYSPIYIAIFYTAA). The chain crosses the membrane as a helical span at residues 275-295 (ILGPAAGYLIGGAMLNVYTEV). The Extracellular portion of the chain corresponds to 296–309 (GQRTELTTDSPLWV). The chain crosses the membrane as a helical span at residues 310-334 (GAWWIGFLGTGIAAFLIAIPILGYP). The Cytoplasmic segment spans residues 335–380 (RQLPGSQRYVVMRAAETQQLKDHSRGAVSNPAFGKTVRDLPLSIWL). A helical membrane pass occupies residues 381–402 (LLRNPTFILLCLAGATEATLIA). Over 403 to 422 (GMSTFGPKFFEAQFSLSASE) the chain is Extracellular. Residues 423–446 (AATLFGYLVVPAGGGGTLLGGFLV) traverse the membrane as a helical segment. The Cytoplasmic portion of the chain corresponds to 447-450 (NKFK). A helical membrane pass occupies residues 451-473 (LRGSGIIRFCLFCTLTSLLAFFV). At 474–582 (FLMHCPNVHM…ASTCQSKPFL (109 aa)) the chain is on the extracellular side. One can recognise a Kazal-like domain in the interval 500 to 557 (LDLKAACNAIYCCQPKHYSPLCGSDGTMYYSPCYAGCPADAETDLGGQKVYRGCSCIL). 2 cysteine pairs are disulfide-bonded: cysteine 506/cysteine 536 and cysteine 521/cysteine 555. The N-linked (GlcNAc...) asparagine glycan is linked to asparagine 566. Residues 583–605 (LVLVFVVIIFTFLSSIPALTATL) form a helical membrane-spanning segment. Residues 606 to 614 (RCVSDRQRS) lie on the Cytoplasmic side of the membrane. The helical transmembrane segment at 615-640 (FALGIQWIVVRTLGSIPGPIAFGWVI) threads the bilayer. The Extracellular portion of the chain corresponds to 641–673 (DKACLLWQDQCGHQGSCFVYENEAMSRYMLIAG). The chain crosses the membrane as a helical span at residues 674–691 (LTFKVLGFLFFVAAYFLY). Residues 692–723 (KSPSVSSDGLEASLPSQSSASDSPTEQLQSNV) lie on the Cytoplasmic side of the membrane. The segment at 700 to 723 (GLEASLPSQSSASDSPTEQLQSNV) is disordered. Low complexity predominate over residues 701–723 (LEASLPSQSSASDSPTEQLQSNV).

Belongs to the organo anion transporter (TC 2.A.60) family.

The protein resides in the cell membrane. The catalysed reaction is 3,3',5-triiodo-L-thyronine(out) + L-glutamate(in) = 3,3',5-triiodo-L-thyronine(in) + L-glutamate(out). The enzyme catalyses L-thyroxine(out) + L-glutamate(in) = L-thyroxine(in) + L-glutamate(out). It carries out the reaction estrone 3-sulfate(out) + L-glutamate(in) = estrone 3-sulfate(in) + L-glutamate(out). It catalyses the reaction taurocholate(out) + L-glutamate(in) = taurocholate(in) + L-glutamate(out). The catalysed reaction is 3,3',5-triiodo-L-thyronine(out) = 3,3',5-triiodo-L-thyronine(in). The enzyme catalyses L-thyroxine(out) = L-thyroxine(in). It carries out the reaction 3,3',5'-triiodo-L-thyronine(out) = 3,3',5'-triiodo-L-thyronine(in). It catalyses the reaction estrone 3-sulfate(out) = estrone 3-sulfate(in). The catalysed reaction is 17beta-estradiol 17-O-(beta-D-glucuronate)(out) = 17beta-estradiol 17-O-(beta-D-glucuronate)(in). The enzyme catalyses taurocholate(out) = taurocholate(in). It carries out the reaction prostaglandin E2(out) = prostaglandin E2(in). Functionally, organic anion antiporter with apparent broad substrate specificity. Recognizes various substrates including thyroid hormones 3,3',5-triiodo-L-thyronine (T3), L-thyroxine (T4) and 3,3',5'-triiodo-L-thyronine (rT3), conjugated steroids such as estrone 3-sulfate and estradiol 17-beta glucuronide, bile acids such as taurocholate and prostanoids such as prostaglandin E2, likely operating in a tissue-specific manner. May be involved in uptake of metabolites from the circulation into organs such as kidney, liver or placenta. Possibly drives the selective transport of thyroid hormones and estrogens coupled to an outward glutamate gradient across the microvillous membrane of the placenta. The transport mechanism, its electrogenicity and potential tissue-specific counterions remain to be elucidated. In Mus musculus (Mouse), this protein is Solute carrier organic anion transporter family member 4A1 (Slco4a1).